We begin with the raw amino-acid sequence, 238 residues long: Sugar fermentation stimulation protein homolog (238 aa).

The protein belongs to the SfsA family.

In Histophilus somni (strain 2336) (Haemophilus somnus), this protein is Sugar fermentation stimulation protein homolog.